A 762-amino-acid polypeptide reads, in one-letter code: Polyribonucleotide nucleotidyltransferase (762 aa).

Positions 531 and 537 each coordinate Mg(2+). Positions 597–656 (PRVTTIKVPVDKIGEVIGPKGKVINSITEETGAQISIEDDGTVFVGATDGPSAQAAIDKI) constitute a KH domain. The S1 motif domain maps to 668-737 (GERFLGTVVK…KRGKISLVLV (70 aa)).

It belongs to the polyribonucleotide nucleotidyltransferase family. Mg(2+) serves as cofactor.

Its subcellular location is the cytoplasm. It catalyses the reaction RNA(n+1) + phosphate = RNA(n) + a ribonucleoside 5'-diphosphate. Its function is as follows. Involved in mRNA degradation. Catalyzes the phosphorolysis of single-stranded polyribonucleotides processively in the 3'- to 5'-direction. The sequence is that of Polyribonucleotide nucleotidyltransferase from Mycobacterium marinum (strain ATCC BAA-535 / M).